We begin with the raw amino-acid sequence, 415 residues long: Gamma-glutamyl phosphate reductase 1 (415 aa).

This sequence belongs to the gamma-glutamyl phosphate reductase family.

Its subcellular location is the cytoplasm. The catalysed reaction is L-glutamate 5-semialdehyde + phosphate + NADP(+) = L-glutamyl 5-phosphate + NADPH + H(+). The protein operates within amino-acid biosynthesis; L-proline biosynthesis; L-glutamate 5-semialdehyde from L-glutamate: step 2/2. Catalyzes the NADPH-dependent reduction of L-glutamate 5-phosphate into L-glutamate 5-semialdehyde and phosphate. The product spontaneously undergoes cyclization to form 1-pyrroline-5-carboxylate. This Bacillus licheniformis (strain ATCC 14580 / DSM 13 / JCM 2505 / CCUG 7422 / NBRC 12200 / NCIMB 9375 / NCTC 10341 / NRRL NRS-1264 / Gibson 46) protein is Gamma-glutamyl phosphate reductase 1.